Consider the following 253-residue polypeptide: MRFDILTLFPAMFQGPLTESILKRAQQAGRIEIHLHDIRQWTTDRHRTADDTPYGGGAGMVMKAEPLAAAIRAVRAADERPGVTILLTPDGELLTQQIVRELATLPRLLLVCGHYEGIDERVRETLIDRELSIGDYVLTGGELAAMVVVDAVARLVPGVIDSESIVEESHSDFLLEYPHYTRPAVWEGRAVPPVLLSGHHGEIARWRRAERLRRTLVRRPDLLARAAAAGVLTKADLALLAELGWRPETSNGA.

S-adenosyl-L-methionine-binding positions include Gly113 and 133 to 138 (IGDYVL).

The protein belongs to the RNA methyltransferase TrmD family. As to quaternary structure, homodimer.

The protein localises to the cytoplasm. It carries out the reaction guanosine(37) in tRNA + S-adenosyl-L-methionine = N(1)-methylguanosine(37) in tRNA + S-adenosyl-L-homocysteine + H(+). Functionally, specifically methylates guanosine-37 in various tRNAs. The sequence is that of tRNA (guanine-N(1)-)-methyltransferase from Chloroflexus aurantiacus (strain ATCC 29366 / DSM 635 / J-10-fl).